A 218-amino-acid polypeptide reads, in one-letter code: Ras-related protein Rab-4A (218 aa).

GTP is bound by residues Gly-23, Thr-24, Gly-25, Lys-26, Ser-27, Cys-28, Ser-42, His-44, and Thr-45. Ser-27 is a Mg(2+) binding site. The Switch 1 motif lies at 44–49 (HTIGVE). Residues Thr-45 and Asp-68 each coordinate Mg(2+). Residues 70–79 (AGQERFRSVT) carry the Switch 2 motif. Gly-71 serves as a coordination point for GTP. Gln-72 is subject to 5-glutamyl serotonin. 5 residues coordinate GTP: Asn-126, Lys-127, Asp-129, Ala-157, and Leu-158. A Phosphoserine modification is found at Ser-190. Phosphoserine; by CDK1 is present on Ser-204. Residues Cys-216 and Cys-218 are each lipidated (S-geranylgeranyl cysteine). Cys-218 is modified (cysteine methyl ester).

It belongs to the small GTPase superfamily. Rab family. As to quaternary structure, interacts with SGSM1, SGSM2 and SGSM3. Interacts with RAB11FIP1, RABEP1, ZFYVE20 and RUFY1. Interacts (membrane-bound form) with NDRG1; the interaction involves NDRG1 in vesicular recycling of E-cadherin. Interacts (in GTP-bound form) with GRIPAP1 (via N-terminus). Interacts with RABEP1 and RBSN. Does not interact with HPS4. Does not interact with HPS4. Interacts with RABEP2; this interaction may mediate VEGFR2 cell surface expression. Mg(2+) serves as cofactor. In terms of processing, serotonylation of Gln-72 by TGM2 during activation and aggregation of platelets leads to constitutive activation of GTPase activity. Phosphorylated by CDK1 kinase during mitosis. In terms of tissue distribution, expressed in the central nervous system, including cortex, cerebellum, midbrain and spinal cord, and in the kidney, lung, liver and spleen.

It is found in the membrane. The protein resides in the cytoplasm. It localises to the early endosome membrane. Its subcellular location is the recycling endosome membrane. The enzyme catalyses GTP + H2O = GDP + phosphate + H(+). Its activity is regulated as follows. Regulated by guanine nucleotide exchange factors (GEFs) which promote the exchange of bound GDP for free GTP. Regulated by GTPase activating proteins (GAPs) which increase the GTP hydrolysis activity. Inhibited by GDP dissociation inhibitors (GDIs). The small GTPases Rab are key regulators of intracellular membrane trafficking, from the formation of transport vesicles to their fusion with membranes. Rabs cycle between an inactive GDP-bound form and an active GTP-bound form that is able to recruit to membranes different sets of downstream effectors directly responsible for vesicle formation, movement, tethering and fusion. RAB4A is involved in protein transport. Also plays a role in vesicular traffic. Mediates VEGFR2 endosomal trafficking to enhance VEGFR2 signaling. Acts as a regulator of platelet alpha-granule release during activation and aggregation of platelets. In Mus musculus (Mouse), this protein is Ras-related protein Rab-4A.